The primary structure comprises 354 residues: Thiamine thiazole synthase (354 aa).

Residues alanine 83, 104 to 105, glycine 112, and valine 177 each bind substrate; that span reads EA. 2,3-didehydroalanine (Cys) is present on cysteine 210. Residues aspartate 212, histidine 227, methionine 305, and 315–317 each bind substrate; that span reads RMG.

The protein belongs to the THI4 family. Homooctamer. Requires Fe cation as cofactor. During the catalytic reaction, a sulfide is transferred from Cys-210 to a reaction intermediate, generating a dehydroalanine residue.

It is found in the cytoplasm. The protein localises to the nucleus. The enzyme catalyses [ADP-thiazole synthase]-L-cysteine + glycine + NAD(+) = [ADP-thiazole synthase]-dehydroalanine + ADP-5-ethyl-4-methylthiazole-2-carboxylate + nicotinamide + 3 H2O + 2 H(+). Involved in biosynthesis of the thiamine precursor thiazole. Catalyzes the conversion of NAD and glycine to adenosine diphosphate 5-(2-hydroxyethyl)-4-methylthiazole-2-carboxylic acid (ADT), an adenylated thiazole intermediate. The reaction includes an iron-dependent sulfide transfer from a conserved cysteine residue of the protein to a thiazole intermediate. The enzyme can only undergo a single turnover, which suggests it is a suicide enzyme. May have additional roles in adaptation to various stress conditions and in DNA damage tolerance. In Candida albicans (strain SC5314 / ATCC MYA-2876) (Yeast), this protein is Thiamine thiazole synthase.